The chain runs to 68 residues: DNA-directed RNA polymerase subunit omega (68 aa).

It belongs to the RNA polymerase subunit omega family. The RNAP catalytic core consists of 2 alpha, 1 beta, 1 beta' and 1 omega subunit. When a sigma factor is associated with the core the holoenzyme is formed, which can initiate transcription.

It carries out the reaction RNA(n) + a ribonucleoside 5'-triphosphate = RNA(n+1) + diphosphate. Promotes RNA polymerase assembly. Latches the N- and C-terminal regions of the beta' subunit thereby facilitating its interaction with the beta and alpha subunits. The polypeptide is DNA-directed RNA polymerase subunit omega (Nitrosospira multiformis (strain ATCC 25196 / NCIMB 11849 / C 71)).